A 168-amino-acid chain; its full sequence is S-ribosylhomocysteine lyase (168 aa).

Fe cation contacts are provided by His-54, His-58, and Cys-128.

The protein belongs to the LuxS family. Homodimer. Fe cation is required as a cofactor.

It catalyses the reaction S-(5-deoxy-D-ribos-5-yl)-L-homocysteine = (S)-4,5-dihydroxypentane-2,3-dione + L-homocysteine. In terms of biological role, involved in the synthesis of autoinducer 2 (AI-2) which is secreted by bacteria and is used to communicate both the cell density and the metabolic potential of the environment. The regulation of gene expression in response to changes in cell density is called quorum sensing. Catalyzes the transformation of S-ribosylhomocysteine (RHC) to homocysteine (HC) and 4,5-dihydroxy-2,3-pentadione (DPD). The protein is S-ribosylhomocysteine lyase of Actinobacillus succinogenes (strain ATCC 55618 / DSM 22257 / CCUG 43843 / 130Z).